Reading from the N-terminus, the 682-residue chain is Tetratricopeptide repeat protein 39B (682 aa).

2 TPR repeats span residues 393-426 and 626-659; these read SLVL…QEEW and PFTL…YKDY.

This sequence belongs to the TTC39 family.

Regulates high density lipoprotein (HDL) cholesterol metabolism by promoting the ubiquitination and degradation of the oxysterols receptors LXR (NR1H2 and NR1H3). This is Tetratricopeptide repeat protein 39B from Homo sapiens (Human).